The sequence spans 256 residues: 2,3,4,5-tetrahydropyridine-2,6-dicarboxylate N-acetyltransferase (256 aa).

The protein belongs to the transferase hexapeptide repeat family. DapH subfamily.

The catalysed reaction is (S)-2,3,4,5-tetrahydrodipicolinate + acetyl-CoA + H2O = L-2-acetamido-6-oxoheptanedioate + CoA. The protein operates within amino-acid biosynthesis; L-lysine biosynthesis via DAP pathway; LL-2,6-diaminopimelate from (S)-tetrahydrodipicolinate (acetylase route): step 1/3. In terms of biological role, catalyzes the transfer of an acetyl group from acetyl-CoA to tetrahydrodipicolinate. This is 2,3,4,5-tetrahydropyridine-2,6-dicarboxylate N-acetyltransferase from Lactococcus lactis subsp. cremoris (strain MG1363).